The primary structure comprises 694 residues: Follicle-stimulating hormone receptor (694 aa).

Positions 1-17 are cleaved as a signal peptide; the sequence is MALLLVSLLAFLGSGAG. 2 disulfides stabilise this stretch: C18/C25 and C23/C32. The region spanning 18–46 is the LRRNT domain; sequence CHHWLCHCSDRVFLCQDSKVTEIPPDLPR. Over 18 to 365 the chain is Extracellular; that stretch reads CHHWLCHCSD…EDIMGYNILR (348 aa). LRR repeat units follow at residues 49–72, 73–97, 98–118, 119–143, 144–169, 170–192, 193–216, 217–240, and 241–259; these read IELR…FKDL, EKIE…LPKL, HEIR…AFQN, LPNL…KIQS, LQKV…MGLS, FDSL…AFNG, TQLD…VFRG, ASGP…GLEN, and LKKL…PSLD. N191 and N199 each carry an N-linked (GlcNAc...) asparagine glycan. Intrachain disulfides connect C275–C345, C276–C292, C276–C355, and C292–C337. N-linked (GlcNAc...) asparagine glycans are attached at residues N293 and N311. A helical membrane pass occupies residues 366-386; that stretch reads VLIWFISILAITGNITVLVIL. The Cytoplasmic segment spans residues 387-397; sequence TTSQYKLTVPR. The chain crosses the membrane as a helical span at residues 398–420; the sequence is FLMCNLAFADLCIGIYLLPIASV. Residues 421-442 are Extracellular-facing; sequence DIHTKSQYHNYAIDWQTAVGCD. C441 and C516 are oxidised to a cystine. The chain crosses the membrane as a helical span at residues 443-464; sequence AAGFFTAFASELSVYTLTAIPL. Over 465 to 484 the chain is Cytoplasmic; sequence ERWHTITHAMQLERKVQLRH. A helical transmembrane segment spans residues 485 to 507; that stretch reads AASVMVMGWVFAFAAALLPIFGV. Residues 508 to 527 lie on the Extracellular side of the membrane; it reads SSYMKVSICLPIDIDSPLSQ. The helical transmembrane segment at 528-549 threads the bilayer; the sequence is LYVMALLVLNVLAFVVICGCYT. The Cytoplasmic portion of the chain corresponds to 550 to 572; the sequence is HIYLTVRNPNIVSSSSDTKIAKR. Residues 573 to 596 traverse the membrane as a helical segment; that stretch reads MATLIFTDFLCMAPISLFAISASL. Topologically, residues 597 to 607 are extracellular; the sequence is KAPLITVSKAK. The chain crosses the membrane as a helical span at residues 608-629; it reads ILLVLFYPINSCANPFLYAIFT. At 630–694 the chain is on the cytoplasmic side; that stretch reads KNFRRDFFIL…LVPLSQSAHN (65 aa).

It belongs to the G-protein coupled receptor 1 family. FSH/LSH/TSH subfamily. Homotrimer. Functions as a homotrimer binding the FSH hormone heterodimer composed of CGA and FSHB. Interacts with ARRB2. Interacts with APPL2; interaction is independent of follicle stimulating hormone stimulation. Post-translationally, N-glycosylated; indirectly required for FSH-binding, possibly via a conformational change that allows high affinity binding of hormone.

The protein resides in the cell membrane. G protein-coupled receptor for follitropin, the follicle-stimulating hormone. Through cAMP production activates the downstream PI3K-AKT and ERK1/ERK2 signaling pathways. The chain is Follicle-stimulating hormone receptor (FSHR) from Mesocricetus auratus (Golden hamster).